The primary structure comprises 222 residues: Glutathione S-transferase 3 (222 aa).

Residues 2-83 (APLKLYGMPL…YIASKYASEG (82 aa)) enclose the GST N-terminal domain. Glutathione-binding positions include S12, 13–14 (PN), 41–42 (HK), 54–55 (QI), and 67–68 (ES). The GST C-terminal domain maps to 89–219 (ATASAAKLEV…AAIPLPPPPS (131 aa)).

Belongs to the GST superfamily. Phi family. In terms of assembly, homodimer.

It carries out the reaction RX + glutathione = an S-substituted glutathione + a halide anion + H(+). Conjugation of reduced glutathione to a wide number of exogenous and endogenous hydrophobic electrophiles. Involved in the detoxification of certain herbicides. This chain is Glutathione S-transferase 3, found in Zea mays (Maize).